The primary structure comprises 369 residues: Anhydro-N-acetylmuramic acid kinase (369 aa).

Position 12-19 (12-19 (GTSMDGVD)) interacts with ATP.

The protein belongs to the anhydro-N-acetylmuramic acid kinase family.

The catalysed reaction is 1,6-anhydro-N-acetyl-beta-muramate + ATP + H2O = N-acetyl-D-muramate 6-phosphate + ADP + H(+). It functions in the pathway amino-sugar metabolism; 1,6-anhydro-N-acetylmuramate degradation. It participates in cell wall biogenesis; peptidoglycan recycling. Functionally, catalyzes the specific phosphorylation of 1,6-anhydro-N-acetylmuramic acid (anhMurNAc) with the simultaneous cleavage of the 1,6-anhydro ring, generating MurNAc-6-P. Is required for the utilization of anhMurNAc either imported from the medium or derived from its own cell wall murein, and thus plays a role in cell wall recycling. The sequence is that of Anhydro-N-acetylmuramic acid kinase from Shewanella sp. (strain MR-7).